The chain runs to 357 residues: Putative RING-H2 finger protein ATL37 (357 aa).

The N-terminal stretch at 1–31 (MTIFTRDFSHRILACVLLPLFLFQCLPYVTC) is a signal peptide. A helical transmembrane segment spans residues 47–67 (SSIIGIVLLSLFLLLLVVYCL). Residues 120-162 (CAICLCEFEDEEPLRWMPPCSHTFHANCIDEWLSSRSTCPVCR) form an RING-type; atypical zinc finger. The segment at 172–210 (SFPHPSMDVETGNAQRGVQESPDERSLTGSSVTCNNNAN) is disordered. Positions 198–210 (LTGSSVTCNNNAN) are enriched in polar residues. S273 is subject to Phosphoserine. Disordered regions lie at residues 281–304 (RSSR…QGRQ) and 327–357 (LDRD…PEKN). Polar residues predominate over residues 283–304 (SRQGYRSGSVGNERTGFSQGRQ). The span at 340 to 357 (NDKDFGERSFQRLMPEKN) shows a compositional bias: basic and acidic residues.

It belongs to the RING-type zinc finger family. ATL subfamily.

The protein resides in the membrane. It catalyses the reaction S-ubiquitinyl-[E2 ubiquitin-conjugating enzyme]-L-cysteine + [acceptor protein]-L-lysine = [E2 ubiquitin-conjugating enzyme]-L-cysteine + N(6)-ubiquitinyl-[acceptor protein]-L-lysine.. The protein operates within protein modification; protein ubiquitination. The protein is Putative RING-H2 finger protein ATL37 (ATL37) of Arabidopsis thaliana (Mouse-ear cress).